Consider the following 113-residue polypeptide: Cell cycle protein GpsB (113 aa).

A coiled-coil region spans residues 36–65 (IKDYETYAALVKSLRQEIADLKEELARKPQ). Residues 61–82 (ARKPQVSSAPSPSHPDPIDVAA) are disordered.

It belongs to the GpsB family. As to quaternary structure, forms polymers through the coiled coil domains. Interacts with PBP1, MreC and EzrA.

The protein resides in the cytoplasm. Its function is as follows. Divisome component that associates with the complex late in its assembly, after the Z-ring is formed, and is dependent on DivIC and PBP2B for its recruitment to the divisome. Together with EzrA, is a key component of the system that regulates PBP1 localization during cell cycle progression. Its main role could be the removal of PBP1 from the cell pole after pole maturation is completed. Also contributes to the recruitment of PBP1 to the division complex. Not essential for septum formation. This is Cell cycle protein GpsB from Streptococcus pneumoniae (strain Hungary19A-6).